Reading from the N-terminus, the 377-residue chain is Succinyl-diaminopimelate desuccinylase (377 aa).

H66 contacts Zn(2+). D68 is a catalytic residue. Residue D99 coordinates Zn(2+). The Proton acceptor role is filled by E133. E134, E163, and H349 together coordinate Zn(2+).

The protein belongs to the peptidase M20A family. DapE subfamily. As to quaternary structure, homodimer. The cofactor is Zn(2+). Requires Co(2+) as cofactor.

It carries out the reaction N-succinyl-(2S,6S)-2,6-diaminopimelate + H2O = (2S,6S)-2,6-diaminopimelate + succinate. It participates in amino-acid biosynthesis; L-lysine biosynthesis via DAP pathway; LL-2,6-diaminopimelate from (S)-tetrahydrodipicolinate (succinylase route): step 3/3. Catalyzes the hydrolysis of N-succinyl-L,L-diaminopimelic acid (SDAP), forming succinate and LL-2,6-diaminopimelate (DAP), an intermediate involved in the bacterial biosynthesis of lysine and meso-diaminopimelic acid, an essential component of bacterial cell walls. This Legionella pneumophila (strain Corby) protein is Succinyl-diaminopimelate desuccinylase.